Reading from the N-terminus, the 369-residue chain is Putative agmatine deiminase (369 aa).

Cys355 functions as the Amidino-cysteine intermediate in the catalytic mechanism.

It belongs to the agmatine deiminase family.

It carries out the reaction agmatine + H2O = N-carbamoylputrescine + NH4(+). This chain is Putative agmatine deiminase, found in Marinomonas sp. (strain MWYL1).